The sequence spans 202 residues: MPPKKKGIGGSKKEKTKKSTPEKDDGLTEKYRRSVLDVSVLKEHLALRSGVARQATAVRDELKSQVRDLEQLLSQERSDMKDITADLNRQYKSMETDLQSKADKLEASVDLLEKQLAECQVELKSERELRENTEAEKDAIISDLQSKLDSMERECEKILHGCLDSLLSHLADTRMKWEEQSTVIHQDVKDMLREFGINPLHM.

Residues 1-29 are disordered; the sequence is MPPKKKGIGGSKKEKTKKSTPEKDDGLTE. Positions 11 to 29 are enriched in basic and acidic residues; it reads SKKEKTKKSTPEKDDGLTE. A coiled-coil region spans residues 50 to 161; the sequence is GVARQATAVR…ERECEKILHG (112 aa).

Belongs to the DRC12 family. In terms of assembly, component of the nexin-dynein regulatory complex (N-DRC).

The protein resides in the cytoplasm. Its subcellular location is the cytoskeleton. It is found in the flagellum axoneme. Component of the nexin-dynein regulatory complex (N-DRC), a key regulator of ciliary/flagellar motility which maintains the alignment and integrity of the distal axoneme and regulates microtubule sliding in motile axonemes. This is Dynein regulatory complex protein 12 (drc12) from Danio rerio (Zebrafish).